Consider the following 156-residue polypeptide: Small ribosomal subunit protein uS7 (156 aa).

The protein belongs to the universal ribosomal protein uS7 family. Part of the 30S ribosomal subunit. Contacts proteins S9 and S11.

One of the primary rRNA binding proteins, it binds directly to 16S rRNA where it nucleates assembly of the head domain of the 30S subunit. Is located at the subunit interface close to the decoding center, probably blocks exit of the E-site tRNA. This is Small ribosomal subunit protein uS7 from Oceanobacillus iheyensis (strain DSM 14371 / CIP 107618 / JCM 11309 / KCTC 3954 / HTE831).